An 867-amino-acid chain; its full sequence is G-protein coupled receptor family C group 6 member A (867 aa).

Positions 1–19 (MDLMSFILLWAGLMKVAEA) are cleaved as a signal peptide. Residues 20 to 566 (SIAQFSQLGA…EYFDWNSGFA (547 aa)) are Extracellular-facing. Residues N51, N55, N97, N296, N308, N336, N356, N370, N527, and N547 are each glycosylated (N-linked (GlcNAc...) asparagine). A helical membrane pass occupies residues 567-587 (IVLLILAALGVLLLFFMSALF). At 588–602 (FWQRHSPVVKAAGGP) the chain is on the cytoplasmic side. The chain crosses the membrane as a helical span at residues 603–623 (LCHLILVSLLGSFISVVFFVG). Residues 624–634 (EPSDLTCRARQ) are Extracellular-facing. Residues 635–655 (VIFGFSFTLCVSCILVKSLKI) form a helical membrane-spanning segment. Residues 656-675 (LLAFEMNFELKELLCMLYKP) are Cytoplasmic-facing. A helical membrane pass occupies residues 676 to 696 (YMIVSVGMGVQIIICTVWLTL). Over 697 to 716 (YKPFKDKEVQTESILLECNE) the chain is Extracellular. The helical transmembrane segment at 717–737 (GFYVMFWLMLGYIALLALFCF) threads the bilayer. Topologically, residues 738 to 754 (TFAYIGRKLPQKYNEAK) are cytoplasmic. Residues 755–775 (FITFSMVICLMAWIIFIPIHV) traverse the membrane as a helical segment. The Extracellular portion of the chain corresponds to 776 to 781 (TTSGKY). A helical transmembrane segment spans residues 782–802 (VPAVEMVVILISNYGILSCHF). Over 803–867 (LPKSYIILFK…LSFVPEEKHE (65 aa)) the chain is Cytoplasmic.

The protein belongs to the G-protein coupled receptor 3 family. As to quaternary structure, homodimer; disulfide-linked.

It localises to the cell membrane. Olfactory receptor that is activated by amino acids that act as potent odorants in fish. Displays preference for acidic amino acids such as Glu over basic amino acids. The chain is G-protein coupled receptor family C group 6 member A (gprc6a) from Danio rerio (Zebrafish).